Here is a 409-residue protein sequence, read N- to C-terminus: UV excision repair protein RAD23 homolog B (409 aa).

The region spanning Met1 to Ala79 is the Ubiquitin-like domain. Residues Val80–Asn175 form a disordered region. Residues Ser81 to Ala143 show a composition bias toward low complexity. The span at Lys144–Ala153 shows a compositional bias: basic and acidic residues. Thr155 carries the post-translational modification Phosphothreonine. Ser160 bears the Phosphoserine mark. A compositionally biased stretch (polar residues) spans Ser160–Asn175. Phosphothreonine is present on Thr164. At Ser174 the chain carries Phosphoserine. Thr186 is modified (phosphothreonine). A UBA 1 domain is found at Gln188–Gly228. At Ser199 the chain carries Phosphoserine. Tyr202 bears the Phosphotyrosine mark. The tract at residues Gln236–Leu276 is disordered. The span at Ser252–Ser271 shows a compositional bias: low complexity. The 44-residue stretch at His274 to Ile317 folds into the STI1 domain. A UBA 2 domain is found at Pro364 to Gln404.

This sequence belongs to the RAD23 family. In terms of assembly, component of the XPC complex composed of XPC, RAD23B and CETN2. Interacts with NGLY1 and PSMC1. Interacts with ATXN3. Interacts with PSMD4 and PSMC5. Interacts with AMFR. Interacts with VCP; the interaction is indirect and mediated by NGLY1.

It localises to the nucleus. The protein resides in the cytoplasm. Functionally, multiubiquitin chain receptor involved in modulation of proteasomal degradation. Binds to polyubiquitin chains. Proposed to be capable to bind simultaneously to the 26S proteasome and to polyubiquitinated substrates and to deliver ubiquitinated proteins to the proteasome. May play a role in endoplasmic reticulum-associated degradation (ERAD) of misfolded glycoproteins by association with PNGase and delivering deglycosylated proteins to the proteasome. Involved in global genome nucleotide excision repair (GG-NER) by acting as component of the XPC complex. Cooperatively with CETN2 appears to stabilize XPC. May protect XPC from proteasomal degradation. In terms of biological role, the XPC complex is proposed to represent the first factor bound at the sites of DNA damage and together with other core recognition factors, XPA, RPA and the TFIIH complex, is part of the pre-incision (or initial recognition) complex. The XPC complex recognizes a wide spectrum of damaged DNA characterized by distortions of the DNA helix such as single-stranded loops, mismatched bubbles or single-stranded overhangs. The orientation of XPC complex binding appears to be crucial for inducing a productive NER. XPC complex is proposed to recognize and to interact with unpaired bases on the undamaged DNA strand which is followed by recruitment of the TFIIH complex and subsequent scanning for lesions in the opposite strand in a 5'-to-3' direction by the NER machinery. Cyclobutane pyrimidine dimers (CPDs) which are formed upon UV-induced DNA damage esacpe detection by the XPC complex due to a low degree of structural perurbation. Instead they are detected by the UV-DDB complex which in turn recruits and cooperates with the XPC complex in the respective DNA repair. In vitro, the XPC:RAD23B dimer is sufficient to initiate NER; it preferentially binds to cisplatin and UV-damaged double-stranded DNA and also binds to a variety of chemically and structurally diverse DNA adducts. XPC:RAD23B contacts DNA both 5' and 3' of a cisplatin lesion with a preference for the 5' side. XPC:RAD23B induces a bend in DNA upon binding. XPC:RAD23B stimulates the activity of DNA glycosylases TDG and SMUG1. The protein is UV excision repair protein RAD23 homolog B (RAD23B) of Homo sapiens (Human).